The following is a 689-amino-acid chain: tRNA 5-methylaminomethyl-2-thiouridine biosynthesis bifunctional protein MnmC (689 aa).

A tRNA (mnm(5)s(2)U34)-methyltransferase region spans residues 1–245 (MNQRPIQTAT…KREMLTGTLP (245 aa)). The tract at residues 270–689 (IGGGIVSALT…RSPATQESSR (420 aa)) is FAD-dependent cmnm(5)s(2)U34 oxidoreductase.

It in the N-terminal section; belongs to the methyltransferase superfamily. tRNA (mnm(5)s(2)U34)-methyltransferase family. In the C-terminal section; belongs to the DAO family. FAD serves as cofactor.

The protein resides in the cytoplasm. The enzyme catalyses 5-aminomethyl-2-thiouridine(34) in tRNA + S-adenosyl-L-methionine = 5-methylaminomethyl-2-thiouridine(34) in tRNA + S-adenosyl-L-homocysteine + H(+). Its function is as follows. Catalyzes the last two steps in the biosynthesis of 5-methylaminomethyl-2-thiouridine (mnm(5)s(2)U) at the wobble position (U34) in tRNA. Catalyzes the FAD-dependent demodification of cmnm(5)s(2)U34 to nm(5)s(2)U34, followed by the transfer of a methyl group from S-adenosyl-L-methionine to nm(5)s(2)U34, to form mnm(5)s(2)U34. The protein is tRNA 5-methylaminomethyl-2-thiouridine biosynthesis bifunctional protein MnmC of Yersinia pseudotuberculosis serotype I (strain IP32953).